A 611-amino-acid chain; its full sequence is Protein Spindly-A (611 aa).

Residues 1 to 390 (MEESETVLKL…KENEKIKDEL (390 aa)) adopt a coiled-coil conformation. A disordered region spans residues 487–611 (TCTAESTDGR…PNATTQCPQQ (125 aa)). Basic and acidic residues predominate over residues 493–511 (TDGRIHSKEDLSLSTKEQD). Over residues 552-567 (HNCSVTSASPRSTSED) the composition is skewed to polar residues. Over residues 570 to 583 (SESKRFDEEQEKRK) the composition is skewed to basic and acidic residues. The segment covering 602–611 (PNATTQCPQQ) has biased composition (polar residues).

The protein belongs to the Spindly family.

The protein localises to the chromosome. Its subcellular location is the centromere. It is found in the kinetochore. In terms of biological role, required for the localization of dynein and dynactin to the mitotic kintochore. Dynein is believed to control the initial lateral interaction between the kinetochore and spindle microtubules and to facilitate the subsequent formation of end-on kinetochore-microtubule attachments mediated by the NDC80 complex. The protein is Protein Spindly-A (spdl1-a) of Xenopus laevis (African clawed frog).